The primary structure comprises 515 residues: Pisatin demethylase (515 aa).

Cysteine 453 is a binding site for heme.

Belongs to the cytochrome P450 family. The cofactor is heme.

Its function is as follows. Can detoxify the phytoalexin pisatin from garden pea. Pisatin is an antimicrobial compound produced by pea in response to infection by plant pathogens. In Fusarium vanettenii (Neocosmospora pisi), this protein is Pisatin demethylase (PDAT9).